Consider the following 1064-residue polypeptide: Lysine-specific demethylase 4A (1064 aa).

A2 is subject to N-acetylalanine. Residues 14–56 enclose the JmjN domain; that stretch reads IMTFYPTMEEFRNFSRYIAYIESQGAHRAGLAKVVPPKEWKPR. Y132 is a 2-oxoglutarate binding site. In terms of domain architecture, JmjC spans 142-308; it reads EKHVDEWNIG…YGKQAVLCSC (167 aa). Fe cation-binding residues include H188 and E190. Residues N198 and K206 each coordinate 2-oxoglutarate. Zn(2+) is bound by residues C234 and H240. K241 is a 2-oxoglutarate binding site. Position 276 (H276) interacts with Fe cation. C306 and C308 together coordinate Zn(2+). 3 disordered regions span residues 358 to 384, 501 to 537, and 616 to 642; these read ELPP…EEGD, FSGS…RAQG, and SDDE…PLSQ. Residues 366–382 show a composition bias toward acidic residues; it reads EEECPEDDMEGVEDGEE. Low complexity predominate over residues 509–532; it reads SSSLGSGSSRDSVSSDSETSEPLS. Phosphoserine is present on S523. The interval 597-638 is interaction with NCOR1; that stretch reads RQPLSKLPRHHPLVLQECVSDDETSEQLTPEEEAEETEAWAK. Residues 616-634 show a composition bias toward acidic residues; it reads SDDETSEQLTPEEEAEETE. Residues 709 to 767 form a PHD-type 1 zinc finger; sequence MCFTSTGCGTDINLSTPYLEEDGTSILVSCKKCSVRVHASCYGVPPAKASEDWMCSRCS. The segment at 772–805 adopts a C2HC pre-PHD-type zinc-finger fold; sequence EEDCCLCSLRGGALQRANDDRWVHVSCAVAILEA. The segment at 828–885 adopts a PHD-type 2 zinc-finger fold; the sequence is LKCIFCKKRRKRTAGCCVQCSHGRCPTAFHVSCAQAAGVMMQPDDWPFVVFITCFRHK. Tudor domains lie at 897 to 954 and 955 to 1011; these read QSIT…CLQF and GPPA…EELP.

It belongs to the JHDM3 histone demethylase family. As to quaternary structure, interacts with histone deacetylase proteins HDAC1, HDAC2 and HDAC3. Interacts with RB and NCOR1. Interacts with VRK1. It depends on Fe(2+) as a cofactor. In terms of processing, ubiquitinated by RNF8 and RNF168, leading to its degradation. Degradation promotes accessibility of H4K20me2 mark for DNA repair protein TP53BP1, which is then recruited. Also ubiquitinated by the SCF(FBXO22) complex; leading to proteasomal degradation.

The protein localises to the nucleus. The enzyme catalyses N(6),N(6),N(6)-trimethyl-L-lysyl(9)-[histone H3] + 2 2-oxoglutarate + 2 O2 = N(6)-methyl-L-lysyl(9)-[histone H3] + 2 formaldehyde + 2 succinate + 2 CO2. The catalysed reaction is N(6),N(6),N(6)-trimethyl-L-lysyl(36)-[histone H3] + 2 2-oxoglutarate + 2 O2 = N(6)-methyl-L-lysyl(36)-[histone H3] + 2 formaldehyde + 2 succinate + 2 CO2. In terms of biological role, histone demethylase that specifically demethylates 'Lys-9' and 'Lys-36' residues of histone H3, thereby playing a central role in histone code. Does not demethylate histone H3 'Lys-4', H3 'Lys-27' nor H4 'Lys-20'. Demethylates trimethylated H3 'Lys-9' and H3 'Lys-36' residue, while it has no activity on mono- and dimethylated residues. Demethylation of Lys residue generates formaldehyde and succinate. Participates in transcriptional repression of ASCL2 and E2F-responsive promoters via the recruitment of histone deacetylases and NCOR1, respectively. In Pongo abelii (Sumatran orangutan), this protein is Lysine-specific demethylase 4A (KDM4A).